A 458-amino-acid chain; its full sequence is Tyrosine phenol-lyase (458 aa).

Lys258 bears the N6-(pyridoxal phosphate)lysine mark.

Belongs to the beta-eliminating lyase family. In terms of assembly, homotetramer. Requires pyridoxal 5'-phosphate as cofactor.

The catalysed reaction is L-tyrosine + H2O = phenol + pyruvate + NH4(+). This chain is Tyrosine phenol-lyase (tpl), found in Symbiobacterium sp. (strain SC-1).